The following is a 617-amino-acid chain: Dihydroxy-acid dehydratase (617 aa).

Position 81 (D81) interacts with Mg(2+). C122 contacts [2Fe-2S] cluster. Residues D123 and K124 each coordinate Mg(2+). K124 carries the N6-carboxylysine modification. C195 provides a ligand contact to [2Fe-2S] cluster. E491 contributes to the Mg(2+) binding site. The Proton acceptor role is filled by S517.

The protein belongs to the IlvD/Edd family. As to quaternary structure, homodimer. [2Fe-2S] cluster is required as a cofactor. Requires Mg(2+) as cofactor.

It carries out the reaction (2R)-2,3-dihydroxy-3-methylbutanoate = 3-methyl-2-oxobutanoate + H2O. It catalyses the reaction (2R,3R)-2,3-dihydroxy-3-methylpentanoate = (S)-3-methyl-2-oxopentanoate + H2O. The protein operates within amino-acid biosynthesis; L-isoleucine biosynthesis; L-isoleucine from 2-oxobutanoate: step 3/4. It functions in the pathway amino-acid biosynthesis; L-valine biosynthesis; L-valine from pyruvate: step 3/4. In terms of biological role, functions in the biosynthesis of branched-chain amino acids. Catalyzes the dehydration of (2R,3R)-2,3-dihydroxy-3-methylpentanoate (2,3-dihydroxy-3-methylvalerate) into 2-oxo-3-methylpentanoate (2-oxo-3-methylvalerate) and of (2R)-2,3-dihydroxy-3-methylbutanoate (2,3-dihydroxyisovalerate) into 2-oxo-3-methylbutanoate (2-oxoisovalerate), the penultimate precursor to L-isoleucine and L-valine, respectively. The sequence is that of Dihydroxy-acid dehydratase from Rhodospirillum rubrum (strain ATCC 11170 / ATH 1.1.1 / DSM 467 / LMG 4362 / NCIMB 8255 / S1).